The sequence spans 137 residues: Fatty acid-binding protein homolog 7 (137 aa).

The protein belongs to the calycin superfamily. Fatty-acid binding protein (FABP) family.

The chain is Fatty acid-binding protein homolog 7 (lbp-7) from Caenorhabditis elegans.